The primary structure comprises 324 residues: MSLLRSLRFFPVACTGRSARAVLLQPSQPWLTFHAGPSLSSAASSKELLMKLRRKTGYSFVNCKKALETCGGDLKQAEDWLHKQAQKEGWSKAAKLHGRKTKEGLIGLLQEGNTAVLVEVNCETDFVSRNLKFQQLVQQVALGTMAHCQNLTDRLSTYSKGFLNSSELSELAAGPDREGSLKDQLALAIGKLGENMILKRAAWVKVPSGFYVGSYVHGVTQSPSLQNLVLGKYGALVICETPEQIANLEEVGRRLGQHVVGMAPLSVGSLDDEPGGETETRMLPQPYLLDPSITLGQYVQPQGVTVVDFVRFECGEDEQVAEAE.

The N-terminal 44 residues, 1 to 44, are a transit peptide targeting the mitochondrion; the sequence is MSLLRSLRFFPVACTGRSARAVLLQPSQPWLTFHAGPSLSSAAS. N6-succinyllysine is present on residues Lys75, Lys132, and Lys191. A Phosphoserine modification is found at Ser269.

Belongs to the EF-Ts family.

The protein resides in the mitochondrion. Associates with the EF-Tu.GDP complex and induces the exchange of GDP to GTP. It remains bound to the aminoacyl-tRNA.EF-Tu.GTP complex up to the GTP hydrolysis stage on the ribosome. This chain is Elongation factor Ts, mitochondrial (Tsfm), found in Mus musculus (Mouse).